The primary structure comprises 214 residues: Thymidylate kinase (214 aa).

An ATP-binding site is contributed by 7 to 14; sequence GIEGAGKT.

This sequence belongs to the thymidylate kinase family.

The catalysed reaction is dTMP + ATP = dTDP + ADP. Functionally, phosphorylation of dTMP to form dTDP in both de novo and salvage pathways of dTTP synthesis. This is Thymidylate kinase from Desulfosudis oleivorans (strain DSM 6200 / JCM 39069 / Hxd3) (Desulfococcus oleovorans).